The sequence spans 166 residues: Putative signal peptidase complex catalytic subunit SEC11B (166 aa).

Topologically, residues 1-6 are cytoplasmic; it reads MNKWRL. Residues 7–24 form a helical; Signal-anchor for type II membrane protein membrane-spanning segment; the sequence is YYQVLNFGMIVSSALMIW. Residues 25-166 are Extracellular-facing; that stretch reads KGLMVITGSE…LGLFVLVHRE (142 aa). S43 is an active-site residue.

It belongs to the peptidase S26B family.

It is found in the membrane. It carries out the reaction Cleavage of hydrophobic, N-terminal signal or leader sequences from secreted and periplasmic proteins.. In terms of biological role, putative component of some signal peptidase complex which removes signal peptides from nascent proteins as they are translocated into the lumen of the endoplasmic reticulum. In Homo sapiens (Human), this protein is Putative signal peptidase complex catalytic subunit SEC11B (SEC11B).